The sequence spans 308 residues: uncharacterized protein (308 aa).

This is an uncharacterized protein from Bacillus subtilis (strain 168).